The primary structure comprises 1002 residues: ATP-dependent DNA helicase MPH1 (1002 aa).

Residues 108–275 enclose the Helicase ATP-binding domain; it reads IVRCALFENV…EVVNNLHISK (168 aa). Residue 121 to 128 coordinates ATP; it reads IPTGTGKT. Positions 223-226 match the DEAH box motif; the sequence is DEAH. Residues 506–669 form the Helicase C-terminal domain; it reads DEETYIRKNK…ALEYTKSDRI (164 aa). Residues 531 to 551 show a composition bias toward basic and acidic residues; sequence ENRVEEEKKRQKEQAKLERTG. 2 disordered regions span residues 531–569 and 799–843; these read ENRV…NQKQ and AKSQ…DSHT. Positions 553–568 are enriched in polar residues; the sequence is RTGSSEEAQLSGMNQK.

Belongs to the DEAD box helicase family. DEAH subfamily. FANCM sub-subfamily. Interacts with the MHF histone-fold complex to form the FANCM-MHF complex.

The protein localises to the nucleus. It catalyses the reaction ATP + H2O = ADP + phosphate + H(+). In terms of biological role, ATP-dependent DNA helicase involved in DNA damage repair by homologous recombination and in genome maintenance. Capable of unwinding D-loops. Plays a role in limiting crossover recombinants during mitotic DNA double-strand break (DSB) repair. Component of a FANCM-MHF complex which promotes gene conversion at blocked replication forks, probably by reversal of the stalled fork. This chain is ATP-dependent DNA helicase MPH1, found in Kluyveromyces lactis (strain ATCC 8585 / CBS 2359 / DSM 70799 / NBRC 1267 / NRRL Y-1140 / WM37) (Yeast).